The chain runs to 93 residues: MVRNSFISIISQKENKENRGSVEFQVLSFTTKIRRLTSHLKLHKTDYSSERGLRKILGKRQRVLAYLSKKNRVRYQELQDLISQLNIRETKTR.

The protein belongs to the universal ribosomal protein uS15 family. As to quaternary structure, part of the 30S ribosomal subunit.

The protein localises to the plastid. Its subcellular location is the chloroplast. The protein is Small ribosomal subunit protein uS15c (rps15) of Jasminum nudiflorum (Winter jasmine).